Consider the following 740-residue polypeptide: Pheromone-regulated membrane protein 10 (740 aa).

Disordered stretches follow at residues 1 to 48 (MGKN…RSGL), 65 to 97 (FADE…KEEC), and 241 to 269 (NQPG…PTGE). Positions 7–18 (QAAEGEEARRGS) are enriched in basic and acidic residues. Over residues 19–33 (ESSGSSAEPSGAVAE) the composition is skewed to low complexity. Acidic residues predominate over residues 67–76 (DEDEVVEQDE). Polar residues predominate over residues 256–267 (SAQTLSSETLPT). The next 10 membrane-spanning stretches (helical) occupy residues 422 to 442 (AWMC…FAFG), 445 to 465 (WINL…QFIV), 475 to 495 (VFEI…GSIP), 499 to 519 (ICFG…YIIL), 541 to 561 (IIYS…FGWI), 574 to 594 (ELSP…LSLI), 599 to 619 (WSQI…TYWS), 622 to 642 (HFTA…GIMG), 651 to 671 (GLAM…GIAS), and 707 to 727 (ITMI…TLVV).

Belongs to the ThrE exporter (TC 2.A.79) family.

It is found in the membrane. This is Pheromone-regulated membrane protein 10 from Eremothecium gossypii (strain ATCC 10895 / CBS 109.51 / FGSC 9923 / NRRL Y-1056) (Yeast).